The primary structure comprises 485 residues: Protein nucleotidyltransferase YdiU (485 aa).

Residues glycine 90, glycine 92, arginine 93, lysine 113, aspartate 125, glycine 126, arginine 176, and arginine 183 each coordinate ATP. Aspartate 252 serves as the catalytic Proton acceptor. Residues asparagine 253 and aspartate 262 each contribute to the Mg(2+) site. Aspartate 262 is an ATP binding site.

It belongs to the SELO family. It depends on Mg(2+) as a cofactor. The cofactor is Mn(2+).

It catalyses the reaction L-seryl-[protein] + ATP = 3-O-(5'-adenylyl)-L-seryl-[protein] + diphosphate. The enzyme catalyses L-threonyl-[protein] + ATP = 3-O-(5'-adenylyl)-L-threonyl-[protein] + diphosphate. The catalysed reaction is L-tyrosyl-[protein] + ATP = O-(5'-adenylyl)-L-tyrosyl-[protein] + diphosphate. It carries out the reaction L-histidyl-[protein] + UTP = N(tele)-(5'-uridylyl)-L-histidyl-[protein] + diphosphate. It catalyses the reaction L-seryl-[protein] + UTP = O-(5'-uridylyl)-L-seryl-[protein] + diphosphate. The enzyme catalyses L-tyrosyl-[protein] + UTP = O-(5'-uridylyl)-L-tyrosyl-[protein] + diphosphate. Its function is as follows. Nucleotidyltransferase involved in the post-translational modification of proteins. It can catalyze the addition of adenosine monophosphate (AMP) or uridine monophosphate (UMP) to a protein, resulting in modifications known as AMPylation and UMPylation. The polypeptide is Protein nucleotidyltransferase YdiU (Vibrio atlanticus (strain LGP32) (Vibrio splendidus (strain Mel32))).